We begin with the raw amino-acid sequence, 134 residues long: MTDEPIKEILGTPKSPKPVAMEKNANGEVVVTLVPLVSEIQLAAATGGAELSCYRCVIPFAVVVLITGTVVTAVAYSFNSHGSIISILGLVLLSLGLFLLASSALCWKVRQRSKKAKRRESQTTLVVNQRGWFA.

Phosphoserine is present on Ser-15. 2 consecutive transmembrane segments (helical) span residues Cys-56–Tyr-76 and Ile-84–Ala-104. Position 121 is a phosphoserine (Ser-121).

Interacts (via C-terminus) with TRPA1 and TRPV1. Interacts with TASOR.

It is found in the cell membrane. The protein resides in the membrane. The protein localises to the perikaryon. It localises to the cytoplasm. Its subcellular location is the perinuclear region. It is found in the endoplasmic reticulum. Functionally, plays a role during embryonic arterial endothelium differentiation and vascular morphogenesis through the ACVRL1 receptor-dependent signaling pathway upon stimulation by bone morphogenetic proteins, such as GDF2/BMP9 and BMP10. Involved in the regulation of nociception, acting as a modulator of the interaction between TRPA1 and TRPV1, two molecular sensors and mediators of pain signals in dorsal root ganglia (DRG) neurons. Mechanistically, it weakens their interaction, thereby releasing the inhibition of TRPA1 by TRPV1 and increasing the single-channel open probability of the TRPA1-TRPV1 complex. The protein is Transmembrane protein 100 (TMEM100) of Bos taurus (Bovine).